We begin with the raw amino-acid sequence, 312 residues long: Holliday junction branch migration complex subunit RuvB (312 aa).

Residues 1 to 168 (MKTNYEFRPQ…FGHIFHLNEY (168 aa)) are large ATPase domain (RuvB-L). ATP-binding positions include Arg8, Gly49, Lys52, Thr53, Thr54, 115–117 (EDF), Arg158, Tyr168, and Arg206. Thr53 contacts Mg(2+). A small ATPAse domain (RuvB-S) region spans residues 169–234 (EPSEISAIIL…DIKNIFKKIQ (66 aa)). The head domain (RuvB-H) stretch occupies residues 237–312 (EFGLDEQDIN…DFLKNNQLIK (76 aa)). DNA-binding residues include Lys290 and Arg295.

It belongs to the RuvB family. As to quaternary structure, homohexamer. Forms an RuvA(8)-RuvB(12)-Holliday junction (HJ) complex. HJ DNA is sandwiched between 2 RuvA tetramers; dsDNA enters through RuvA and exits via RuvB. An RuvB hexamer assembles on each DNA strand where it exits the tetramer. Each RuvB hexamer is contacted by two RuvA subunits (via domain III) on 2 adjacent RuvB subunits; this complex drives branch migration. In the full resolvosome a probable DNA-RuvA(4)-RuvB(12)-RuvC(2) complex forms which resolves the HJ.

The protein resides in the cytoplasm. The catalysed reaction is ATP + H2O = ADP + phosphate + H(+). The RuvA-RuvB-RuvC complex processes Holliday junction (HJ) DNA during genetic recombination and DNA repair, while the RuvA-RuvB complex plays an important role in the rescue of blocked DNA replication forks via replication fork reversal (RFR). RuvA specifically binds to HJ cruciform DNA, conferring on it an open structure. The RuvB hexamer acts as an ATP-dependent pump, pulling dsDNA into and through the RuvAB complex. RuvB forms 2 homohexamers on either side of HJ DNA bound by 1 or 2 RuvA tetramers; 4 subunits per hexamer contact DNA at a time. Coordinated motions by a converter formed by DNA-disengaged RuvB subunits stimulates ATP hydrolysis and nucleotide exchange. Immobilization of the converter enables RuvB to convert the ATP-contained energy into a lever motion, pulling 2 nucleotides of DNA out of the RuvA tetramer per ATP hydrolyzed, thus driving DNA branch migration. The RuvB motors rotate together with the DNA substrate, which together with the progressing nucleotide cycle form the mechanistic basis for DNA recombination by continuous HJ branch migration. Branch migration allows RuvC to scan DNA until it finds its consensus sequence, where it cleaves and resolves cruciform DNA. The chain is Holliday junction branch migration complex subunit RuvB from Ureaplasma parvum serovar 3 (strain ATCC 27815 / 27 / NCTC 11736).